Here is a 551-residue protein sequence, read N- to C-terminus: HTH-type transcriptional regulator SgrR (551 aa).

In terms of domain architecture, HTH marR-type spans 1 to 116; it reads MPSARLQQQF…LVSHLGRSFR (116 aa). A DNA-binding region (H-T-H motif) is located at residues 26–49; sequence LNELAALLSCSRRHMRTLLNTMQD. The solute-binding stretch occupies residues 163–492; that stretch reads ELEADIAHHW…IDWQADAARW (330 aa).

In terms of biological role, activates the small RNA gene sgrS under glucose-phosphate stress conditions as well as yfdZ. Represses its own transcription under both stress and non-stress conditions. Might act as a sensor of the intracellular accumulation of phosphoglucose by binding these molecules in its C-terminal solute-binding domain. This chain is HTH-type transcriptional regulator SgrR, found in Shigella sonnei (strain Ss046).